A 427-amino-acid polypeptide reads, in one-letter code: Enolase (427 aa).

(2R)-2-phosphoglycerate is bound at residue Gln-162. Glu-204 serves as the catalytic Proton donor. Mg(2+)-binding residues include Asp-241, Glu-283, and Asp-310. Lys-335, Arg-364, Ser-365, and Lys-386 together coordinate (2R)-2-phosphoglycerate. The Proton acceptor role is filled by Lys-335.

Belongs to the enolase family. Mg(2+) serves as cofactor.

Its subcellular location is the cytoplasm. The protein localises to the secreted. It localises to the cell surface. It catalyses the reaction (2R)-2-phosphoglycerate = phosphoenolpyruvate + H2O. It functions in the pathway carbohydrate degradation; glycolysis; pyruvate from D-glyceraldehyde 3-phosphate: step 4/5. Catalyzes the reversible conversion of 2-phosphoglycerate (2-PG) into phosphoenolpyruvate (PEP). It is essential for the degradation of carbohydrates via glycolysis. The protein is Enolase of Mycolicibacterium smegmatis (strain ATCC 700084 / mc(2)155) (Mycobacterium smegmatis).